We begin with the raw amino-acid sequence, 96 residues long: Co-chaperonin GroES (96 aa).

Belongs to the GroES chaperonin family. As to quaternary structure, heptamer of 7 subunits arranged in a ring. Interacts with the chaperonin GroEL.

It localises to the cytoplasm. Functionally, together with the chaperonin GroEL, plays an essential role in assisting protein folding. The GroEL-GroES system forms a nano-cage that allows encapsulation of the non-native substrate proteins and provides a physical environment optimized to promote and accelerate protein folding. GroES binds to the apical surface of the GroEL ring, thereby capping the opening of the GroEL channel. In Hyphomonas neptunium (strain ATCC 15444), this protein is Co-chaperonin GroES.